The sequence spans 429 residues: UDP-N-acetylglucosamine 1-carboxyvinyltransferase 2 (429 aa).

22–23 (KN) provides a ligand contact to phosphoenolpyruvate. Arg-92 is a UDP-N-acetyl-alpha-D-glucosamine binding site. Cys-116 functions as the Proton donor in the catalytic mechanism. Cys-116 bears the 2-(S-cysteinyl)pyruvic acid O-phosphothioketal mark. Residues 121-125 (RPIDQ), Asp-305, and Ile-327 each bind UDP-N-acetyl-alpha-D-glucosamine.

Belongs to the EPSP synthase family. MurA subfamily.

Its subcellular location is the cytoplasm. It catalyses the reaction phosphoenolpyruvate + UDP-N-acetyl-alpha-D-glucosamine = UDP-N-acetyl-3-O-(1-carboxyvinyl)-alpha-D-glucosamine + phosphate. Its pathway is cell wall biogenesis; peptidoglycan biosynthesis. In terms of biological role, cell wall formation. Adds enolpyruvyl to UDP-N-acetylglucosamine. The protein is UDP-N-acetylglucosamine 1-carboxyvinyltransferase 2 of Bacillus subtilis (strain 168).